The following is a 75-amino-acid chain: Small ribosomal subunit protein bS18 (75 aa).

The protein belongs to the bacterial ribosomal protein bS18 family. Part of the 30S ribosomal subunit. Forms a tight heterodimer with protein bS6.

Its function is as follows. Binds as a heterodimer with protein bS6 to the central domain of the 16S rRNA, where it helps stabilize the platform of the 30S subunit. This Teredinibacter turnerae (strain ATCC 39867 / T7901) protein is Small ribosomal subunit protein bS18.